A 663-amino-acid polypeptide reads, in one-letter code: CXXC-type zinc finger protein 1 (663 aa).

The segment at 60–110 (QAYCICRSSDCSRFMIGCDGCEEWYHGDCIGITEKEAKHIKQYYCRRCKKE) adopts a PHD-type zinc-finger fold. Residues 134–161 (TSLNAPGVGPSGAAPAAAPVASATTSQQ) show a composition bias toward low complexity. Residues 134–183 (TSLNAPGVGPSGAAPAAAPVASATTSQQAPPPTTAAAKRKNSSAREPKMG) are disordered. A CXXC-type zinc finger spans residues 175–219 (SSAREPKMGKRCGTCEGCRRPNCNQCDACRVRVGHKPRCIFRTCV). Residues Cys186, Cys189, Cys192, Cys197, Cys200, Cys203, Cys213, and Cys218 each coordinate Zn(2+). The segment at 230–254 (QATQAGPSRKREKAAPKSRNVQVGP) is disordered. Ser258 bears the Phosphoserine mark.

In terms of assembly, component of the SET1 complex, composed at least of the catalytic subunit Set1, wds/WDR5, Wdr82, Rbbp5, ash2, Cfp1/CXXC1, hcf and Dpy-30L1.

It localises to the nucleus. In terms of biological role, component of the SET1 complex that specifically di- and trimethylates 'Lys-4' of histone H3. Essential for Set1 association with chromatin and trimethylation of histone H3 at 'Lys-4' at transcription puffs. Additionally, is critical for general chromosomal association of Set1. This is CXXC-type zinc finger protein 1 (Cfp1) from Drosophila melanogaster (Fruit fly).